We begin with the raw amino-acid sequence, 44 residues long: DNA-directed RNA polymerase subunit Rpo12 (44 aa).

The Zn(2+) site is built by C8, C22, and C25.

This sequence belongs to the archaeal Rpo12/eukaryotic RPC10 RNA polymerase subunit family. Part of the RNA polymerase complex. The cofactor is Zn(2+).

The protein localises to the cytoplasm. It carries out the reaction RNA(n) + a ribonucleoside 5'-triphosphate = RNA(n+1) + diphosphate. DNA-dependent RNA polymerase (RNAP) catalyzes the transcription of DNA into RNA using the four ribonucleoside triphosphates as substrates. In Halobacterium salinarum (strain ATCC 29341 / DSM 671 / R1), this protein is DNA-directed RNA polymerase subunit Rpo12.